The chain runs to 240 residues: Ribonuclease PH (240 aa).

Phosphate contacts are provided by residues R86 and 124–126; that span reads GTR.

This sequence belongs to the RNase PH family. Homohexameric ring arranged as a trimer of dimers.

It catalyses the reaction tRNA(n+1) + phosphate = tRNA(n) + a ribonucleoside 5'-diphosphate. Phosphorolytic 3'-5' exoribonuclease that plays an important role in tRNA 3'-end maturation. Removes nucleotide residues following the 3'-CCA terminus of tRNAs; can also add nucleotides to the ends of RNA molecules by using nucleoside diphosphates as substrates, but this may not be physiologically important. Probably plays a role in initiation of 16S rRNA degradation (leading to ribosome degradation) during starvation. This chain is Ribonuclease PH, found in Rickettsia prowazekii (strain Madrid E).